We begin with the raw amino-acid sequence, 547 residues long: Glucose-6-phosphate isomerase (547 aa).

Glu351 functions as the Proton donor in the catalytic mechanism. Catalysis depends on residues His382 and Lys510.

Belongs to the GPI family.

Its subcellular location is the cytoplasm. It carries out the reaction alpha-D-glucose 6-phosphate = beta-D-fructose 6-phosphate. Its pathway is carbohydrate biosynthesis; gluconeogenesis. It functions in the pathway carbohydrate degradation; glycolysis; D-glyceraldehyde 3-phosphate and glycerone phosphate from D-glucose: step 2/4. In terms of biological role, catalyzes the reversible isomerization of glucose-6-phosphate to fructose-6-phosphate. The protein is Glucose-6-phosphate isomerase of Saccharophagus degradans (strain 2-40 / ATCC 43961 / DSM 17024).